Here is a 184-residue protein sequence, read N- to C-terminus: Oligoribonuclease (184 aa).

The Exonuclease domain occupies 9 to 172 (LIWIDLEMTG…DDIRESIEEL (164 aa)). Y130 is a catalytic residue.

It belongs to the oligoribonuclease family.

Its subcellular location is the cytoplasm. Its function is as follows. 3'-to-5' exoribonuclease specific for small oligoribonucleotides. The polypeptide is Oligoribonuclease (Actinobacillus pleuropneumoniae serotype 5b (strain L20)).